Consider the following 371-residue polypeptide: Queuine tRNA-ribosyltransferase (371 aa).

Asp89 serves as the catalytic Proton acceptor. Substrate contacts are provided by residues 89-93 (DSGGF), Asp143, Gln185, and Gly212. Residues 243-249 (GVGKPED) are RNA binding. The active-site Nucleophile is Asp262. The segment at 267–271 (TRNAR) is RNA binding; important for wobble base 34 recognition. Zn(2+) contacts are provided by Cys300, Cys302, Cys305, and His331.

This sequence belongs to the queuine tRNA-ribosyltransferase family. As to quaternary structure, homodimer. Within each dimer, one monomer is responsible for RNA recognition and catalysis, while the other monomer binds to the replacement base PreQ1. Requires Zn(2+) as cofactor.

The catalysed reaction is 7-aminomethyl-7-carbaguanine + guanosine(34) in tRNA = 7-aminomethyl-7-carbaguanosine(34) in tRNA + guanine. It participates in tRNA modification; tRNA-queuosine biosynthesis. Functionally, catalyzes the base-exchange of a guanine (G) residue with the queuine precursor 7-aminomethyl-7-deazaguanine (PreQ1) at position 34 (anticodon wobble position) in tRNAs with GU(N) anticodons (tRNA-Asp, -Asn, -His and -Tyr). Catalysis occurs through a double-displacement mechanism. The nucleophile active site attacks the C1' of nucleotide 34 to detach the guanine base from the RNA, forming a covalent enzyme-RNA intermediate. The proton acceptor active site deprotonates the incoming PreQ1, allowing a nucleophilic attack on the C1' of the ribose to form the product. After dissociation, two additional enzymatic reactions on the tRNA convert PreQ1 to queuine (Q), resulting in the hypermodified nucleoside queuosine (7-(((4,5-cis-dihydroxy-2-cyclopenten-1-yl)amino)methyl)-7-deazaguanosine). This Pseudomonas putida (strain ATCC 47054 / DSM 6125 / CFBP 8728 / NCIMB 11950 / KT2440) protein is Queuine tRNA-ribosyltransferase.